We begin with the raw amino-acid sequence, 137 residues long: Proofreading thioesterase EntH (137 aa).

The active-site Nucleophile or proton acceptor is the Glu-63.

The protein belongs to the thioesterase PaaI family. In terms of assembly, homotetramer. Dimer of dimers. Interacts specifically with the aryl carrier protein (ArCP) domain of EntB.

It localises to the cytoplasm. It participates in siderophore biosynthesis; enterobactin biosynthesis. Its function is as follows. Required for optimal enterobactin synthesis. Acts as a proofreading enzyme that prevents EntB misacylation by hydrolyzing the thioester bound existing between EntB and wrongly charged molecules. The polypeptide is Proofreading thioesterase EntH (Salmonella paratyphi B (strain ATCC BAA-1250 / SPB7)).